The sequence spans 415 residues: Dynein assembly factor with WD repeat domains 1 (415 aa).

WD repeat units lie at residues 90 to 129 (AHIL…ELHT), 132 to 172 (GHRN…CFYT), 175 to 214 (GHTA…EVST), 217 to 256 (GHFA…KVHV), 259 to 298 (GHRG…CLAT), 301 to 340 (GHND…CLCQ), 343 to 384 (GHKG…QVLE), and 385 to 415 (GHSD…RIWH).

Belongs to the WD repeat WDR69 family. Expressed in organs bearing motile cilia, including the pronephros, otic vesicles and Kupffer's vesicle.

The protein resides in the cytoplasm. The protein localises to the cytoskeleton. It is found in the flagellum basal body. It localises to the flagellum axoneme. Functionally, required for axonemal dynein assembly and ciliary motility in ciliated organs, including Kupffer's vesicle, during embryogenesis. Facilitates the onset of robust cilia motility during development. The sequence is that of Dynein assembly factor with WD repeat domains 1 (daw1) from Danio rerio (Zebrafish).